A 279-amino-acid chain; its full sequence is Energy-coupling factor transporter ATP-binding protein EcfA2 (279 aa).

In terms of domain architecture, ABC transporter spans Ile3–Gly245. Residue Gly40–Ser47 coordinates ATP.

Belongs to the ABC transporter superfamily. Energy-coupling factor EcfA family. As to quaternary structure, forms a stable energy-coupling factor (ECF) transporter complex composed of 2 membrane-embedded substrate-binding proteins (S component), 2 ATP-binding proteins (A component) and 2 transmembrane proteins (T component).

The protein localises to the cell membrane. ATP-binding (A) component of a common energy-coupling factor (ECF) ABC-transporter complex. Unlike classic ABC transporters this ECF transporter provides the energy necessary to transport a number of different substrates. The sequence is that of Energy-coupling factor transporter ATP-binding protein EcfA2 from Streptococcus pneumoniae serotype 2 (strain D39 / NCTC 7466).